A 57-amino-acid polypeptide reads, in one-letter code: Gene 19.3 protein (57 aa).

The chain is Gene 19.3 protein (19.3) from Escherichia coli (Bacteriophage T3).